A 559-amino-acid chain; its full sequence is Urocanate hydratase (559 aa).

NAD(+) is bound by residues 53-54, Gln-131, 177-179, Glu-197, Arg-202, 243-244, 264-268, 274-275, and Tyr-323; these read GG, GMG, NA, QTSAH, and YL. The active site involves Cys-411. Position 493 (Gly-493) interacts with NAD(+).

Belongs to the urocanase family. NAD(+) is required as a cofactor.

Its subcellular location is the cytoplasm. The catalysed reaction is 4-imidazolone-5-propanoate = trans-urocanate + H2O. Its pathway is amino-acid degradation; L-histidine degradation into L-glutamate; N-formimidoyl-L-glutamate from L-histidine: step 2/3. Functionally, catalyzes the conversion of urocanate to 4-imidazolone-5-propionate. The chain is Urocanate hydratase from Pseudomonas paraeruginosa (strain DSM 24068 / PA7) (Pseudomonas aeruginosa (strain PA7)).